The sequence spans 278 residues: Probable endonuclease 4 (278 aa).

Positions 70, 108, 143, 176, 179, 210, 223, 225, and 255 each coordinate Zn(2+).

This sequence belongs to the AP endonuclease 2 family. Zn(2+) serves as cofactor.

It catalyses the reaction Endonucleolytic cleavage to 5'-phosphooligonucleotide end-products.. Its function is as follows. Endonuclease IV plays a role in DNA repair. It cleaves phosphodiester bonds at apurinic or apyrimidinic (AP) sites, generating a 3'-hydroxyl group and a 5'-terminal sugar phosphate. The polypeptide is Probable endonuclease 4 (Mycoplasmopsis agalactiae (strain NCTC 10123 / CIP 59.7 / PG2) (Mycoplasma agalactiae)).